Here is a 121-residue protein sequence, read N- to C-terminus: Putative iron-sulfur cluster insertion protein ErpA (121 aa).

Positions 49, 113, and 115 each coordinate iron-sulfur cluster.

The protein belongs to the HesB/IscA family. Homodimer. Requires iron-sulfur cluster as cofactor.

Functionally, required for insertion of 4Fe-4S clusters. The polypeptide is Putative iron-sulfur cluster insertion protein ErpA (Nitrosomonas europaea (strain ATCC 19718 / CIP 103999 / KCTC 2705 / NBRC 14298)).